A 485-amino-acid chain; its full sequence is RAC-beta serine/threonine-protein kinase B (485 aa).

The PH domain occupies methionine 5–asparagine 109. Serine 132 and serine 135 each carry an O-linked (GlcNAc) serine glycan. The Protein kinase domain occupies phenylalanine 156–phenylalanine 413. ATP-binding positions include leucine 162–valine 170 and lysine 185. The active-site Proton acceptor is the aspartate 279. A glycan (O-linked (GlcNAc) threonine) is linked at threonine 310. Phosphothreonine is present on threonine 313. The O-linked (GlcNAc) threonine glycan is linked to threonine 317. Residues alanine 414–glutamate 485 enclose the AGC-kinase C-terminal domain. Residues leucine 454 to glutamate 485 form a disordered region. Residues aspartate 458–proline 472 show a composition bias toward basic and acidic residues. At serine 478 the chain carries Phosphoserine. An O-linked (GlcNAc) serine; alternate glycan is attached at serine 478.

The protein belongs to the protein kinase superfamily. AGC Ser/Thr protein kinase family. RAC subfamily. Phosphorylation on Thr-313 and Ser-478 is required for full activity. Phosphorylation of the activation loop at Thr-313 by PDPK1/PDK1 is a prerequisite for full activation. Phosphorylation by mTORC2 at Ser-478 in response to growth factors plays a key role in AKT1 activation by facilitating subsequent phosphorylation of the activation loop by PDPK1/PDK1.

It carries out the reaction L-seryl-[protein] + ATP = O-phospho-L-seryl-[protein] + ADP + H(+). The catalysed reaction is L-threonyl-[protein] + ATP = O-phospho-L-threonyl-[protein] + ADP + H(+). Its activity is regulated as follows. Two specific sites, one in the kinase domain (Thr-313) and the other in the C-terminal regulatory region (Ser-478), need to be phosphorylated for its full activation. In terms of biological role, akt2-b is one of several closely related serine/threonine-protein kinases known as the AKT kinase, and which regulate many processes including metabolism, proliferation, cell survival, growth and angiogenesis. This is mediated through serine and/or threonine phosphorylation of a range of downstream substrates. Over 100 substrate candidates have been reported so far, but for most of them, no isoform specificity has been reported. May be involved in the inhibition of ciliogenesis. In Xenopus laevis (African clawed frog), this protein is RAC-beta serine/threonine-protein kinase B (akt2-b).